A 320-amino-acid polypeptide reads, in one-letter code: Acetaldehyde dehydrogenase 2 (320 aa).

Cys129 serves as the catalytic Acyl-thioester intermediate. Residues 160–168 (SAGPGTRAN) and Asn287 contribute to the NAD(+) site.

It belongs to the acetaldehyde dehydrogenase family.

It carries out the reaction acetaldehyde + NAD(+) + CoA = acetyl-CoA + NADH + H(+). This is Acetaldehyde dehydrogenase 2 from Burkholderia cenocepacia (strain ATCC BAA-245 / DSM 16553 / LMG 16656 / NCTC 13227 / J2315 / CF5610) (Burkholderia cepacia (strain J2315)).